A 334-amino-acid polypeptide reads, in one-letter code: Sensor protein BceS (334 aa).

The Cytoplasmic segment spans residues 1 to 12; sequence MIKAFLIERRSW. A helical transmembrane segment spans residues 13-33; the sequence is IAAFLFQQALMLFIAFVDPSI. Position 34 (Ser34) is a topological domain, extracellular. The chain crosses the membrane as a helical span at residues 35-55; the sequence is FGNVLYMVYLCILFFIIFLWF. At 56-334 the chain is on the cytoplasmic side; the sequence is RYRKETAFYK…RNQFEHVISV (279 aa). In terms of domain architecture, Histidine kinase spans 121–326; sequence AWIHEVKTPL…VFTLTFPIRN (206 aa). Position 124 is a phosphohistidine; by autocatalysis (His124).

It localises to the cell membrane. It carries out the reaction ATP + protein L-histidine = ADP + protein N-phospho-L-histidine.. Functionally, member of the two-component regulatory system BceS/BceR involved in the regulation of bacitracin resistance. Activates BceR in response to extracellular bacitracin. The polypeptide is Sensor protein BceS (bceS) (Bacillus subtilis (strain 168)).